Here is a 149-residue protein sequence, read N- to C-terminus: D-aminoacyl-tRNA deacylase (149 aa).

The short motif at 137 to 138 (GP) is the Gly-cisPro motif, important for rejection of L-amino acids element.

It belongs to the DTD family. As to quaternary structure, homodimer.

The protein localises to the cytoplasm. It catalyses the reaction glycyl-tRNA(Ala) + H2O = tRNA(Ala) + glycine + H(+). It carries out the reaction a D-aminoacyl-tRNA + H2O = a tRNA + a D-alpha-amino acid + H(+). In terms of biological role, an aminoacyl-tRNA editing enzyme that deacylates mischarged D-aminoacyl-tRNAs. Also deacylates mischarged glycyl-tRNA(Ala), protecting cells against glycine mischarging by AlaRS. Acts via tRNA-based rather than protein-based catalysis; rejects L-amino acids rather than detecting D-amino acids in the active site. By recycling D-aminoacyl-tRNA to D-amino acids and free tRNA molecules, this enzyme counteracts the toxicity associated with the formation of D-aminoacyl-tRNA entities in vivo and helps enforce protein L-homochirality. The polypeptide is D-aminoacyl-tRNA deacylase (Caldicellulosiruptor saccharolyticus (strain ATCC 43494 / DSM 8903 / Tp8T 6331)).